Consider the following 48-residue polypeptide: MAVPKRRVSKTRAAKRRTHYKVSLPMPIKDKDGSYKMPHRANPTTKEY.

Residues 1–20 (MAVPKRRVSKTRAAKRRTHY) are compositionally biased toward basic residues. A disordered region spans residues 1–48 (MAVPKRRVSKTRAAKRRTHYKVSLPMPIKDKDGSYKMPHRANPTTKEY).

The protein belongs to the bacterial ribosomal protein bL32 family.

This chain is Large ribosomal subunit protein bL32 (rpmF), found in Campylobacter jejuni subsp. jejuni serotype O:2 (strain ATCC 700819 / NCTC 11168).